A 174-amino-acid chain; its full sequence is Large ribosomal subunit protein uL10 (174 aa).

The protein belongs to the universal ribosomal protein uL10 family. As to quaternary structure, part of the ribosomal stalk of the 50S ribosomal subunit. The N-terminus interacts with L11 and the large rRNA to form the base of the stalk. The C-terminus forms an elongated spine to which L12 dimers bind in a sequential fashion forming a multimeric L10(L12)X complex.

Functionally, forms part of the ribosomal stalk, playing a central role in the interaction of the ribosome with GTP-bound translation factors. This is Large ribosomal subunit protein uL10 from Anaeromyxobacter dehalogenans (strain 2CP-1 / ATCC BAA-258).